A 191-amino-acid polypeptide reads, in one-letter code: Penicillin-binding protein activator LpoB (191 aa).

Residues 1–16 form the signal peptide; that stretch reads MKRYLSLALAALVLTG. Cys-17 is lipidated: N-palmitoyl cysteine. The S-diacylglycerol cysteine moiety is linked to residue Cys-17.

This sequence belongs to the LpoB family. Interacts with PBP1b.

The protein resides in the cell outer membrane. In terms of biological role, regulator of peptidoglycan synthesis that is essential for the function of penicillin-binding protein 1B (PBP1b). This is Penicillin-binding protein activator LpoB from Yersinia pestis (strain D182038).